A 386-amino-acid chain; its full sequence is Acyl-CoA ligase lcsD (386 aa).

Residues 62 to 132 are SBD1; that stretch reads ELEQTLLAIQ…ELLPACKIIQ (71 aa). 107–115 lines the ATP pocket; that stretch reads AVGASGISK. The SBD2 stretch occupies residues 133-195; sequence GYGMTETTGV…LRSPSVVIGY (63 aa). Residue Thr137 participates in substrate binding. The ATP site is built by Asp216 and Arg235. Residues 243 to 245 and 313 to 316 contribute to the CoA site; these read RGL and HLDG. Position 331 (Lys331) interacts with ATP. The tract at residues 352-386 is disordered; it reads REKAANGVHKVHVNGVKRPEKMEVFDLSSDDEDDD.

The protein belongs to the ATP-dependent AMP-binding enzyme family.

It functions in the pathway secondary metabolite biosynthesis. Its function is as follows. Acyl-CoA ligase; part of the gene cluster that mediates the biosynthesis of the lipopeptide antibiotics leucinostatins that show extensive biological activities, including antimalarial, antiviral, antibacterial, antifungal, and antitumor activities, as well as phytotoxic. Leucinostatin A contains nine amino acid residues, including the unusual amino acid 4-methyl-L-proline (MePro), 2-amino-6-hydroxy-4-methyl-8-oxodecanoic acid (AHyMeOA), 3-hydroxyleucine (HyLeu), alpha-aminoisobutyric acid (AIB), beta-Ala, a 4-methylhex-2-enoic acid at the N-terminus as well as a N1,N1-dimethylpropane-1,2-diamine (DPD) at the C-terminus. The biosynthesis of leucinostatins is probably initiated with the assembly of 4-methylhex-2-enoic acid by a reducing PKS. Two reducing polyketide synthases, lcsB and lcsC, have been identified in the cluster and it is not clear which is the one that assembles 4-methylhex-2-enoic acid since both contain KS, AT, DH, cMT, ER, KR and ACP domains. The polyketide residue might be transferred to the NRPS lcsA, mediated by two additional enzymes, the acyl-CoA ligase lcsD and the thioesterase lcsE. The linear polyketide carboxylic acid, which is released from PKS, is converted to a CoA thioester by lcsD, and then lcsE hydrolyzes the thiol bond and shuttles the polyketide intermediate to lcsA. The C domain of the first module catalyzed the condensation of 4-methylhex-2-enoic acid and MePro carried by domain A1, followed by successive condensations of nine amino acids to trigger the elongation of the linear peptide. A5 and A6 domains of lcsA are proposed to incorporate leucine, A2 AHyMeOA, and A3 incorporates HyLeu. A4, A7 and A8 incorporate AIB. The AHyMeOA in leucinostatin A activated by the A2 might be produced by the second PKS (lcsB or lcsC) present within the cluster. The MePro is probably produced via leucine cyclization and may originate from a separate pathway, independent of the cluster. Another nonproteinogenic amino acid, beta-Ala, could be produced by an aspartic acid decarboxylase also localized outside of the cluster. Two candidates are VFPBJ_01400 and VFPBJ_10476. The final peptide scaffold may be released by the NAD(P)H-dependent thioester reductase (TE) at the C-terminal region of lcsA. Transamination of the lcsA product by the transaminase lcsP may produce DPD at the C-terminus. Further hydroxylation steps performed alternatively by the cytochrome P450 monooxygenases lcsI, lcsK and lcsN then yield the non-methylated leucinostatins precursor. It is also possible that leucines can be hydroxylated prior to their incorporation into the peptide. Varying extents of methylation then lead to the formation of leucinostatins A and B. In Purpureocillium lilacinum (Paecilomyces lilacinus), this protein is Acyl-CoA ligase lcsD.